A 283-amino-acid polypeptide reads, in one-letter code: Biotin synthase (283 aa).

Residues Lys3–Arg232 enclose the Radical SAM core domain. Residues Cys21, Cys25, and Cys28 each contribute to the [4Fe-4S] cluster site. 3 residues coordinate [2Fe-2S] cluster: Cys65, Cys100, and Arg225.

This sequence belongs to the radical SAM superfamily. Biotin synthase family. As to quaternary structure, homodimer. [4Fe-4S] cluster serves as cofactor. [2Fe-2S] cluster is required as a cofactor.

The enzyme catalyses (4R,5S)-dethiobiotin + (sulfur carrier)-SH + 2 reduced [2Fe-2S]-[ferredoxin] + 2 S-adenosyl-L-methionine = (sulfur carrier)-H + biotin + 2 5'-deoxyadenosine + 2 L-methionine + 2 oxidized [2Fe-2S]-[ferredoxin]. It functions in the pathway cofactor biosynthesis; biotin biosynthesis; biotin from 7,8-diaminononanoate: step 2/2. In terms of biological role, catalyzes the conversion of dethiobiotin (DTB) to biotin by the insertion of a sulfur atom into dethiobiotin via a radical-based mechanism. The sequence is that of Biotin synthase from Helicobacter hepaticus (strain ATCC 51449 / 3B1).